A 430-amino-acid chain; its full sequence is Enolase (430 aa).

Q167 lines the (2R)-2-phosphoglycerate pocket. The active-site Proton donor is the E209. The Mg(2+) site is built by D246, E287, and D314. The (2R)-2-phosphoglycerate site is built by K339, R368, S369, and K390. The active-site Proton acceptor is K339.

The protein belongs to the enolase family. Mg(2+) serves as cofactor.

It is found in the cytoplasm. Its subcellular location is the secreted. The protein localises to the cell surface. The enzyme catalyses (2R)-2-phosphoglycerate = phosphoenolpyruvate + H2O. The protein operates within carbohydrate degradation; glycolysis; pyruvate from D-glyceraldehyde 3-phosphate: step 4/5. Catalyzes the reversible conversion of 2-phosphoglycerate (2-PG) into phosphoenolpyruvate (PEP). It is essential for the degradation of carbohydrates via glycolysis. The sequence is that of Enolase from Prochlorococcus marinus (strain MIT 9312).